The primary structure comprises 143 residues: MSKITLIGTDLAKAGMEFTFVGPLSGKCDECSLRNVCFNLEKGRHYRILNVRENINPCFIYNKNKVSTIEVEEATSTFNVQYSRRIMEGSSIELKSMECDYLTCPNIETCNLIHIKEPRKIVIKKILGRIECPKGYDMRKIES.

This sequence belongs to the UPF0179 family.

The polypeptide is UPF0179 protein PTO0851 (Picrophilus torridus (strain ATCC 700027 / DSM 9790 / JCM 10055 / NBRC 100828 / KAW 2/3)).